Reading from the N-terminus, the 214-residue chain is Probable transaldolase (214 aa).

Residue Lys83 is the Schiff-base intermediate with substrate of the active site.

The protein belongs to the transaldolase family. Type 3B subfamily.

It localises to the cytoplasm. It carries out the reaction D-sedoheptulose 7-phosphate + D-glyceraldehyde 3-phosphate = D-erythrose 4-phosphate + beta-D-fructose 6-phosphate. It functions in the pathway carbohydrate degradation; pentose phosphate pathway; D-glyceraldehyde 3-phosphate and beta-D-fructose 6-phosphate from D-ribose 5-phosphate and D-xylulose 5-phosphate (non-oxidative stage): step 2/3. In terms of biological role, transaldolase is important for the balance of metabolites in the pentose-phosphate pathway. The sequence is that of Probable transaldolase from Clostridium botulinum (strain Alaska E43 / Type E3).